Consider the following 201-residue polypeptide: 3-isopropylmalate dehydratase small subunit (201 aa).

The protein belongs to the LeuD family. LeuD type 1 subfamily. Heterodimer of LeuC and LeuD.

The enzyme catalyses (2R,3S)-3-isopropylmalate = (2S)-2-isopropylmalate. It functions in the pathway amino-acid biosynthesis; L-leucine biosynthesis; L-leucine from 3-methyl-2-oxobutanoate: step 2/4. Its function is as follows. Catalyzes the isomerization between 2-isopropylmalate and 3-isopropylmalate, via the formation of 2-isopropylmaleate. This Shewanella denitrificans (strain OS217 / ATCC BAA-1090 / DSM 15013) protein is 3-isopropylmalate dehydratase small subunit.